Consider the following 189-residue polypeptide: MAAGTTSDLRNGIVIRYNNDLYQVVEFQHVAPGNWRAFVRMKLKSLTTGKVIEDRVRAGAEIDIVRIERRPMQYLYREGDSFIFMDNDTFDQIPVSADLVGDAVRFMKENETVDLVYDAEKDTIIGVELPIFVNLKVVETTVAVRGDTATNVTKPATLETGAVIEVPAFINEGDVLKIDTRTGEYITRV.

It belongs to the elongation factor P family.

It localises to the cytoplasm. It participates in protein biosynthesis; polypeptide chain elongation. Its function is as follows. Involved in peptide bond synthesis. Stimulates efficient translation and peptide-bond synthesis on native or reconstituted 70S ribosomes in vitro. Probably functions indirectly by altering the affinity of the ribosome for aminoacyl-tRNA, thus increasing their reactivity as acceptors for peptidyl transferase. This is Elongation factor P from Chloroflexus aurantiacus (strain ATCC 29364 / DSM 637 / Y-400-fl).